The following is a 166-amino-acid chain: PTS system glucose-specific EIIA component (166 aa).

Residues 34–138 (DPVFAQKMMG…SVISPIIITN (105 aa)) enclose the PTS EIIA type-1 domain. 2 residues coordinate Zn(2+): histidine 71 and histidine 86. Catalysis depends on histidine 86, which acts as the Tele-phosphohistidine intermediate; for EIIA activity. Position 86 is a phosphohistidine; by HPr (histidine 86).

Heterodimer with glycerol kinase (glpk). Zn(2+) is required as a cofactor.

It localises to the cytoplasm. In terms of biological role, the phosphoenolpyruvate-dependent sugar phosphotransferase system (sugar PTS), a major carbohydrate active transport system, catalyzes the phosphorylation of incoming sugar substrates concomitantly with their translocation across the cell membrane. The enzyme II complex composed of PtsG and Crr is involved in glucose transport. The polypeptide is PTS system glucose-specific EIIA component (crr) (Staphylococcus aureus (strain MSSA476)).